Reading from the N-terminus, the 378-residue chain is S-(hydroxymethyl)glutathione dehydrogenase (378 aa).

Zn(2+) is bound by residues cysteine 49, histidine 71, cysteine 101, cysteine 104, cysteine 107, cysteine 115, and cysteine 178.

It belongs to the zinc-containing alcohol dehydrogenase family. Class-III subfamily. In terms of assembly, homodimer. The cofactor is Zn(2+).

It localises to the cytoplasm. It catalyses the reaction S-(hydroxymethyl)glutathione + NADP(+) = S-formylglutathione + NADPH + H(+). It carries out the reaction S-(hydroxymethyl)glutathione + NAD(+) = S-formylglutathione + NADH + H(+). The catalysed reaction is a primary alcohol + NAD(+) = an aldehyde + NADH + H(+). The enzyme catalyses a secondary alcohol + NAD(+) = a ketone + NADH + H(+). It catalyses the reaction S-nitrosoglutathione + NADH + H(+) = S-(hydroxysulfenamide)glutathione + NAD(+). Its function is as follows. Has high formaldehyde dehydrogenase activity in the presence of glutathione and catalyzes the oxidation of normal alcohols in a reaction that is not GSH-dependent. In addition, hemithiolacetals other than those formed from GSH, including omega-thiol fatty acids, also are substrates. Also acts as a S-nitroso-glutathione reductase by catalyzing the NADH-dependent reduction of S-nitrosoglutathione. This Haemophilus influenzae (strain ATCC 51907 / DSM 11121 / KW20 / Rd) protein is S-(hydroxymethyl)glutathione dehydrogenase (frmA).